A 285-amino-acid chain; its full sequence is Protease HtpX homolog (285 aa).

Transmembrane regions (helical) follow at residues 7 to 27 (TAML…MIGG) and 30 to 50 (GMTI…WFSD). His-131 lines the Zn(2+) pocket. Glu-132 is a catalytic residue. His-135 lines the Zn(2+) pocket. 2 helical membrane passes run 141–161 (ILIS…ANFA) and 177–197 (IAGI…QMAI). Glu-202 provides a ligand contact to Zn(2+).

The protein belongs to the peptidase M48B family. Zn(2+) is required as a cofactor.

Its subcellular location is the cell inner membrane. In Paraburkholderia phytofirmans (strain DSM 17436 / LMG 22146 / PsJN) (Burkholderia phytofirmans), this protein is Protease HtpX homolog.